Consider the following 601-residue polypeptide: Elongation factor 4 (601 aa).

In terms of domain architecture, tr-type G spans 6 to 188 (NRIRNFCIIA…QVVTKIAPPK (183 aa)). GTP-binding positions include 18-23 (DHGKST) and 135-138 (NKID).

It belongs to the TRAFAC class translation factor GTPase superfamily. Classic translation factor GTPase family. LepA subfamily.

It is found in the cell membrane. The catalysed reaction is GTP + H2O = GDP + phosphate + H(+). Required for accurate and efficient protein synthesis under certain stress conditions. May act as a fidelity factor of the translation reaction, by catalyzing a one-codon backward translocation of tRNAs on improperly translocated ribosomes. Back-translocation proceeds from a post-translocation (POST) complex to a pre-translocation (PRE) complex, thus giving elongation factor G a second chance to translocate the tRNAs correctly. Binds to ribosomes in a GTP-dependent manner. In Desulforamulus reducens (strain ATCC BAA-1160 / DSM 100696 / MI-1) (Desulfotomaculum reducens), this protein is Elongation factor 4.